A 521-amino-acid chain; its full sequence is MTNIHTDKILILDFGAQYTQLIARRIREIGVYCEIWAWDHDPSEIAGFGAKGIILSGGPESTTLPGAPVAPQEVFDSGLPVFGICYGMQTLAAQLGGATEAADQREFGHAEVDVIAADALFAGLTDHAGAPRLNVWMSHGDHVSQVPPGFTITATTDRIPVAAMSNEDKRWYGVQFHPEVTHTLQGQTLLRRFVVDICGCQTLWTAANIIDDQIARVREQVGDDDVILGLSGGVDSSVVAALLHKAIGDKLTCVFVDTGLLRWQEGDQVMAMFAEHMGVKVIRVNAADRYFAKLEGVSDPEAKRKIIGNLFVEIFDEESNTLANAKWLAQGTIYPDVIESAGSKTGKAHVIKSHHNVGGLPQHMKLGLVEPLRELFKDEVRRLGVELGLPRTMVYRHPFPGPGLGVRILGEVKREYAELLAKADAIFIDELRKADLYDKISQAFAVFLPVKSVGVVGDARAYEWVIALRAVETIDFMTAHWAHLPYDFLGTVSNRIINELRGVSRVVYDISGKPPATIEWE.

The region spanning 8 to 203 (KILILDFGAQ…VVDICGCQTL (196 aa)) is the Glutamine amidotransferase type-1 domain. Catalysis depends on C85, which acts as the Nucleophile. Active-site residues include H177 and E179. The region spanning 204–396 (WTAANIIDDQ…LGLPRTMVYR (193 aa)) is the GMPS ATP-PPase domain. 231–237 (SGGVDSS) contacts ATP.

In terms of assembly, homodimer.

The enzyme catalyses XMP + L-glutamine + ATP + H2O = GMP + L-glutamate + AMP + diphosphate + 2 H(+). It functions in the pathway purine metabolism; GMP biosynthesis; GMP from XMP (L-Gln route): step 1/1. Its function is as follows. Catalyzes the synthesis of GMP from XMP. The chain is GMP synthase [glutamine-hydrolyzing] from Xanthomonas oryzae pv. oryzae (strain PXO99A).